The primary structure comprises 386 residues: V-type proton ATPase subunit B 2 (386 aa).

Belongs to the ATPase alpha/beta chains family. V-ATPase is a heteromultimeric enzyme composed of a peripheral catalytic V1 complex (main components: subunits A, B, C, D, E, and F) attached to an integral membrane V0 proton pore complex (main component: the proteolipid protein).

Non-catalytic subunit of the peripheral V1 complex of vacuolar ATPase. V-ATPase is responsible for acidifying a variety of intracellular compartments in eukaryotic cells. This is V-type proton ATPase subunit B 2 from Gossypium hirsutum (Upland cotton).